Consider the following 305-residue polypeptide: GMP synthase [glutamine-hydrolyzing] subunit B (305 aa).

The 183-residue stretch at 2 to 184 (VKTEKFIQKS…LGLPPEIQHR (183 aa)) folds into the GMPS ATP-PPase domain. 29–35 (SGGVDSS) provides a ligand contact to ATP.

In terms of assembly, heterodimer composed of a glutamine amidotransferase subunit (A) and a GMP-binding subunit (B).

It carries out the reaction XMP + L-glutamine + ATP + H2O = GMP + L-glutamate + AMP + diphosphate + 2 H(+). It functions in the pathway purine metabolism; GMP biosynthesis; GMP from XMP (L-Gln route): step 1/1. In terms of biological role, catalyzes the synthesis of GMP from XMP. This is GMP synthase [glutamine-hydrolyzing] subunit B from Methanoregula boonei (strain DSM 21154 / JCM 14090 / 6A8).